Reading from the N-terminus, the 209-residue chain is Probable phosphatase C1687.21 (209 aa).

Residue His8 is the Tele-phosphohistidine intermediate of the active site. Catalysis depends on Glu82, which acts as the Proton donor/acceptor.

Belongs to the phosphoglycerate mutase family. BPG-dependent PGAM subfamily.

The protein resides in the cytoplasm. It is found in the nucleus. The sequence is that of Probable phosphatase C1687.21 from Schizosaccharomyces pombe (strain 972 / ATCC 24843) (Fission yeast).